Reading from the N-terminus, the 1400-residue chain is DNA-directed RNA polymerase subunit beta' (1400 aa).

4 residues coordinate Zn(2+): Cys71, Cys73, Cys86, and Cys89. Asp462, Asp464, and Asp466 together coordinate Mg(2+). Positions 811, 885, 892, and 895 each coordinate Zn(2+).

The protein belongs to the RNA polymerase beta' chain family. As to quaternary structure, the RNAP catalytic core consists of 2 alpha, 1 beta, 1 beta' and 1 omega subunit. When a sigma factor is associated with the core the holoenzyme is formed, which can initiate transcription. Mg(2+) serves as cofactor. Requires Zn(2+) as cofactor.

The enzyme catalyses RNA(n) + a ribonucleoside 5'-triphosphate = RNA(n+1) + diphosphate. Functionally, DNA-dependent RNA polymerase catalyzes the transcription of DNA into RNA using the four ribonucleoside triphosphates as substrates. The protein is DNA-directed RNA polymerase subunit beta' of Brucella melitensis biotype 1 (strain ATCC 23456 / CCUG 17765 / NCTC 10094 / 16M).